The following is a 152-amino-acid chain: Xanthine-guanine phosphoribosyltransferase (152 aa).

Residues 37–38 (RG), Arg-69, and 88–96 (DDLVDTGGT) each bind 5-phospho-alpha-D-ribose 1-diphosphate. Arg-69 lines the GMP pocket. Asp-89 is a binding site for Mg(2+). Guanine is bound by residues Asp-92 and Ile-135. Positions 92 and 135 each coordinate xanthine. GMP-binding positions include 92-96 (DTGGT) and 134-135 (WI).

This sequence belongs to the purine/pyrimidine phosphoribosyltransferase family. XGPT subfamily. As to quaternary structure, homotetramer. The cofactor is Mg(2+).

The protein resides in the cell inner membrane. The catalysed reaction is GMP + diphosphate = guanine + 5-phospho-alpha-D-ribose 1-diphosphate. The enzyme catalyses XMP + diphosphate = xanthine + 5-phospho-alpha-D-ribose 1-diphosphate. It catalyses the reaction IMP + diphosphate = hypoxanthine + 5-phospho-alpha-D-ribose 1-diphosphate. Its pathway is purine metabolism; GMP biosynthesis via salvage pathway; GMP from guanine: step 1/1. The protein operates within purine metabolism; XMP biosynthesis via salvage pathway; XMP from xanthine: step 1/1. In terms of biological role, purine salvage pathway enzyme that catalyzes the transfer of the ribosyl-5-phosphate group from 5-phospho-alpha-D-ribose 1-diphosphate (PRPP) to the N9 position of the 6-oxopurines guanine and xanthine to form the corresponding ribonucleotides GMP (guanosine 5'-monophosphate) and XMP (xanthosine 5'-monophosphate), with the release of PPi. To a lesser extent, also acts on hypoxanthine. This is Xanthine-guanine phosphoribosyltransferase from Citrobacter koseri (strain ATCC BAA-895 / CDC 4225-83 / SGSC4696).